Consider the following 848-residue polypeptide: Crooked neck-like protein 1 (848 aa).

Position 2 is an N-acetylalanine (threonine 2). Residues 81-106 are disordered; the sequence is RSSRTPHSTRCRKEDAQPGHHGNGAA. HAT repeat units lie at residues 222 to 254, 256 to 288, 290 to 322, 324 to 355, 357 to 388, 390 to 425, 427 to 461, 471 to 503, 505 to 539, 549 to 585, 587 to 618, 620 to 652, 654 to 688, 690 to 721, 726 to 767, 769 to 807, and 809 to 834; these read DYKL…WEES, KEIQ…MEMK, RQVN…MEEM, GNVA…FELR, KEVD…FEEK, AYFA…FEEN, KEFE…FEKK, IIVS…LVES, AEAE…LWIN, KDPE…FEIR, KNLS…LELQ, REFD…LETI, GDID…FEIE, EETE…FELS, GSLT…EFGT, SDKE…YIFP, and DAAN…EKED. The mediates interaction with HSP90 stretch occupies residues 411–628; sequence MDEHLYVAFA…LREFDRCRKL (218 aa). A Phosphoserine modification is found at serine 503. The tract at residues 827 to 848 is disordered; sequence KQQQEKEDAEHHPDEDVDESES. Over residues 828–840 the composition is skewed to basic and acidic residues; it reads QQQEKEDAEHHPD.

Belongs to the crooked-neck family. Identified in the spliceosome C complex. Present in a spliceosome complex assembled in vitro containing CRNKL1, HPRP8BP and SNRPB2. Component of the minor spliceosome, which splices U12-type introns. Isoform 2 seems to be predominant in the spliceosome complex. Interacts with PPIL2 (via the PPIase cyclophilin-type domain); they may form a trimeric complex with HSP90. As to expression, widely expressed. Highly expressed in testis. Not detected in brain and lung.

It localises to the nucleus. The protein resides in the nucleus speckle. Its function is as follows. Involved in pre-mRNA splicing process. As a component of the minor spliceosome, involved in the splicing of U12-type introns in pre-mRNAs. This Homo sapiens (Human) protein is Crooked neck-like protein 1 (CRNKL1).